The primary structure comprises 317 residues: MRSYLDFEKPVAELEAKLEELRALGARDGAVAIAEDVARLESKAAAALAELYAALTPWQKTQVARHPQRPHFVDYCDALISEFTPLAGDRSFGEDEAIVGGFGRFRGRPVCVIGQEKGASTEARIRHNFGMARPEGYRKAVRLMDLAGRFGLPVLTFVDTAGAYPGIDAEERGQAEAIARSTEACLALGTPNLALVIGEGGSGGAIALATANRVLMLEHAIYSVISPEGAASILWRDAGRAQDAATAMKITAQDLLRLGVIDAIVPEPTGGAHRDPAAAFRAAEEAIAEGLAGLDGLDAEALRDQRAQKFLEIGRKL.

The CoA carboxyltransferase C-terminal domain maps to 39–293 (RLESKAAAAL…EEAIAEGLAG (255 aa)).

It belongs to the AccA family. As to quaternary structure, acetyl-CoA carboxylase is a heterohexamer composed of biotin carboxyl carrier protein (AccB), biotin carboxylase (AccC) and two subunits each of ACCase subunit alpha (AccA) and ACCase subunit beta (AccD).

The protein localises to the cytoplasm. The enzyme catalyses N(6)-carboxybiotinyl-L-lysyl-[protein] + acetyl-CoA = N(6)-biotinyl-L-lysyl-[protein] + malonyl-CoA. It participates in lipid metabolism; malonyl-CoA biosynthesis; malonyl-CoA from acetyl-CoA: step 1/1. Functionally, component of the acetyl coenzyme A carboxylase (ACC) complex. First, biotin carboxylase catalyzes the carboxylation of biotin on its carrier protein (BCCP) and then the CO(2) group is transferred by the carboxyltransferase to acetyl-CoA to form malonyl-CoA. This chain is Acetyl-coenzyme A carboxylase carboxyl transferase subunit alpha, found in Methylobacterium sp. (strain 4-46).